The chain runs to 313 residues: Protein FixB (313 aa).

An FAD-binding site is contributed by 255–283 (LYLAVGISGQIQHMVGANASQTIFAINKD).

The protein belongs to the ETF alpha-subunit/FixB family. As to quaternary structure, heterodimer of FixA and FixB.

It participates in amine and polyamine metabolism; carnitine metabolism. Functionally, required for anaerobic carnitine reduction. May bring reductant to CaiA. The protein is Protein FixB of Escherichia coli O1:K1 / APEC.